The chain runs to 584 residues: AEGREDPELLVTVRGGRLRGLRLKAPGGPVSAFLGIPFEEPPVGPRRFLPPEPKRPWAGVLDATAFQSVCYQYVDTLYPGFEGTEMWNPNRELSEDCLYLNVWTPYPRPTSPTPVLVWIYGGGFYSGASSLDVYYGRFLVQAEGTVLVAMNYRVGAFGFTCLPGSREAPGNVGLLDQRLALQWVQENVAAFGGDPASVTLFGESAGAASVGLHLLSPPSRGLFHRAVLQSGAPNGPWATVGVGEARRRATLLARLVVCPPGGAGGNDTELVACLRTRPAQDLVDHEWRVLPQESIFRFSFVPVVDGDFLSDTPEALINAGDFQGLQVLVGVVKDEGTYFLVYGAPGFSKDNESFISRAQFLAGVRVGVPQASDLAAEAVVLHYTDWLHPEDPARLRDALSDVVGDHNVVCPVAQLAGRLAAQGARVYAYVFEHRASTLSWPLWMGVPHGYEIEFIFGLPLEPSLNYTEEERIFAQRLMRYWANFARTGDPNEPRDAKAPQWPPYTAGAQQYVSLNLRPLEVRRGLRAQACAFWNRFLPKLLSATDTLDEAERQWKAEFHRWSSYMVHWKNQFDHYSKQDRCSDL.

Residue A1 is a signal peptide. A disulfide bridge connects residues C70 and C97. S204 functions as the Acyl-ester intermediate in the catalytic mechanism. A disulfide bond links C258 and C273. An N-linked (GlcNAc...) asparagine glycan is attached at N266. Residue E335 is the Charge relay system of the active site. N351 carries an N-linked (GlcNAc...) asparagine glycan. C410 and C530 form a disulfide bridge. Catalysis depends on H448, which acts as the Charge relay system. N465 carries N-linked (GlcNAc...) asparagine glycosylation.

This sequence belongs to the type-B carboxylesterase/lipase family. As to quaternary structure, homotetramer; composed of disulfide-linked homodimers. Interacts with PRIMA1. The interaction with PRIMA1 is required to anchor it to the basal lamina of cells and organize into tetramers.

Its subcellular location is the synapse. It localises to the secreted. The protein localises to the cell membrane. It catalyses the reaction acetylcholine + H2O = choline + acetate + H(+). Functionally, terminates signal transduction at the neuromuscular junction by rapid hydrolysis of the acetylcholine released into the synaptic cleft. This is Acetylcholinesterase (ACHE) from Oryctolagus cuniculus (Rabbit).